Consider the following 700-residue polypeptide: Cap-specific mRNA (nucleoside-2'-O-)-methyltransferase 2 (700 aa).

A disordered region spans residues 1–21; sequence MSFRSSPQGKPHPMTDYQSIR. The Adrift-type SAM-dependent 2'-O-MTase domain occupies 109–321; the sequence is EFVTVAWCKL…VYVICLNYNK (213 aa). K117 is an active-site residue. S-adenosyl-L-methionine-binding residues include G143, W164, and D234. The active site involves D234. The active-site Proton acceptor is K274.

It is found in the nucleus. It catalyses the reaction a 5'-end (N(7)-methyl 5'-triphosphoguanosine)-(2'-O-methyl-ribonucleoside)-(ribonucleotide) in mRNA + S-adenosyl-L-methionine = a 5'-end (N(7)-methyl 5'-triphosphoguanosine)-(2'-O-methyl-ribonucleoside)-(2'-O-methyl-ribonucleotide) in mRNA + S-adenosyl-L-homocysteine + H(+). Functionally, probable S-adenosyl-L-methionine-dependent methyltransferase that mediates mRNA cap2 2'-O-ribose methylation to the 5'-cap structure of mRNAs. May methylate the ribose of the second nucleotide of a m(7)GpppG-capped mRNA (cap0) to produce m(7)GpppRmpNm (cap2). Regulates expression of tracheal genes required for pathfinding on the segmental nerve. This Drosophila melanogaster (Fruit fly) protein is Cap-specific mRNA (nucleoside-2'-O-)-methyltransferase 2 (cmtr2).